The following is a 153-amino-acid chain: Protein-export protein SecB (153 aa).

This sequence belongs to the SecB family. As to quaternary structure, homotetramer, a dimer of dimers. One homotetramer interacts with 1 SecA dimer.

The protein resides in the cytoplasm. One of the proteins required for the normal export of preproteins out of the cell cytoplasm. It is a molecular chaperone that binds to a subset of precursor proteins, maintaining them in a translocation-competent state. It also specifically binds to its receptor SecA. The chain is Protein-export protein SecB from Edwardsiella ictaluri (strain 93-146).